The chain runs to 80 residues: MDSKREKQAAAQNAVDILHEISTILNCHLDRRTLSICISMIENGVSPEALASVVKELRKQGQEATAQIAQAGSAASSRRR.

The protein belongs to the MOZART1 family. In terms of assembly, part of the gamma-tubulin complex.

The protein localises to the cytoplasm. It is found in the cytoskeleton. Its subcellular location is the microtubule organizing center. It localises to the spindle pole body. Functionally, required for gamma-tubulin complex recruitment to the microtubule organizing center (MTOC). This chain is Mitotic-spindle organizing protein 1, found in Pyricularia oryzae (strain 70-15 / ATCC MYA-4617 / FGSC 8958) (Rice blast fungus).